Consider the following 766-residue polypeptide: Phosphoribosylformylglycinamidine synthase subunit PurL (766 aa).

His66 is an active-site residue. ATP contacts are provided by Tyr69 and Lys113. Glu115 provides a ligand contact to Mg(2+). Substrate-binding positions include 116–119 (SHNH) and Arg138. His117 acts as the Proton acceptor in catalysis. Asp139 lines the Mg(2+) pocket. Gln264 serves as a coordination point for substrate. Asp292 contributes to the Mg(2+) binding site. Residue 336-338 (ESQ) participates in substrate binding. Asn524 and Gly561 together coordinate ATP. Asn562 provides a ligand contact to Mg(2+). Ser564 provides a ligand contact to substrate.

Belongs to the FGAMS family. Monomer. Part of the FGAM synthase complex composed of 1 PurL, 1 PurQ and 2 PurS subunits.

The protein localises to the cytoplasm. It catalyses the reaction N(2)-formyl-N(1)-(5-phospho-beta-D-ribosyl)glycinamide + L-glutamine + ATP + H2O = 2-formamido-N(1)-(5-O-phospho-beta-D-ribosyl)acetamidine + L-glutamate + ADP + phosphate + H(+). It participates in purine metabolism; IMP biosynthesis via de novo pathway; 5-amino-1-(5-phospho-D-ribosyl)imidazole from N(2)-formyl-N(1)-(5-phospho-D-ribosyl)glycinamide: step 1/2. Its function is as follows. Part of the phosphoribosylformylglycinamidine synthase complex involved in the purines biosynthetic pathway. Catalyzes the ATP-dependent conversion of formylglycinamide ribonucleotide (FGAR) and glutamine to yield formylglycinamidine ribonucleotide (FGAM) and glutamate. The FGAM synthase complex is composed of three subunits. PurQ produces an ammonia molecule by converting glutamine to glutamate. PurL transfers the ammonia molecule to FGAR to form FGAM in an ATP-dependent manner. PurS interacts with PurQ and PurL and is thought to assist in the transfer of the ammonia molecule from PurQ to PurL. The chain is Phosphoribosylformylglycinamidine synthase subunit PurL from Mycobacterium bovis (strain BCG / Pasteur 1173P2).